Here is an 883-residue protein sequence, read N- to C-terminus: Phosphoenolpyruvate carboxylase (883 aa).

Active-site residues include His-138 and Lys-546.

This sequence belongs to the PEPCase type 1 family. Requires Mg(2+) as cofactor.

It catalyses the reaction oxaloacetate + phosphate = phosphoenolpyruvate + hydrogencarbonate. Its function is as follows. Forms oxaloacetate, a four-carbon dicarboxylic acid source for the tricarboxylic acid cycle. This Salmonella arizonae (strain ATCC BAA-731 / CDC346-86 / RSK2980) protein is Phosphoenolpyruvate carboxylase.